The following is a 456-amino-acid chain: Enolase (456 aa).

A (2R)-2-phosphoglycerate-binding site is contributed by glutamine 177. Glutamate 219 serves as the catalytic Proton donor. 3 residues coordinate Mg(2+): aspartate 256, glutamate 310, and aspartate 337. 4 residues coordinate (2R)-2-phosphoglycerate: lysine 362, arginine 391, serine 392, and lysine 413. Residue lysine 362 is the Proton acceptor of the active site.

The protein belongs to the enolase family. In terms of assembly, homodimer. It depends on Mg(2+) as a cofactor.

It is found in the cytoplasm. The protein resides in the secreted. The protein localises to the cell surface. The enzyme catalyses (2R)-2-phosphoglycerate = phosphoenolpyruvate + H2O. It participates in carbohydrate degradation; glycolysis; pyruvate from D-glyceraldehyde 3-phosphate: step 4/5. Functionally, catalyzes the reversible conversion of 2-phosphoglycerate (2-PG) into phosphoenolpyruvate (PEP). It is essential for the degradation of carbohydrates via glycolysis. Its function is as follows. 'Moonlights' as a plasminogen receptor. Binds plasminogen, but no fibronectin binding was observed. Plasminogen binding increases bacterial adherence to host cells; plasmin activity leads to degradation of host extracellular matrix proteins, facilitating bacterial dissemination and disease spread. The sequence is that of Enolase from Mycoplasma pneumoniae (strain ATCC 29342 / M129 / Subtype 1) (Mycoplasmoides pneumoniae).